Consider the following 269-residue polypeptide: Phosphatidylglycerol--prolipoprotein diacylglyceryl transferase (269 aa).

7 helical membrane-spanning segments follow: residues 17–37 (LKIHWYGLMYLIGIGGAWLLA), 56–76 (LVFWLSMGVIVGGRLGYVLFY), 92–112 (WKGGMSFHGGFIGVMLAALWF), 120–140 (FFELMDFVAPLVPIGLGAGRI), 174–194 (PSQLYQFALEGVALFVILWLY), 202–222 (MAVSGMFALFYGIFRFIVEFV), and 237–257 (LTMGQLLCVPMIVGGIFLIWL). R139 lines the a 1,2-diacyl-sn-glycero-3-phospho-(1'-sn-glycerol) pocket.

This sequence belongs to the Lgt family.

It is found in the cell inner membrane. It carries out the reaction L-cysteinyl-[prolipoprotein] + a 1,2-diacyl-sn-glycero-3-phospho-(1'-sn-glycerol) = an S-1,2-diacyl-sn-glyceryl-L-cysteinyl-[prolipoprotein] + sn-glycerol 1-phosphate + H(+). It functions in the pathway protein modification; lipoprotein biosynthesis (diacylglyceryl transfer). Catalyzes the transfer of the diacylglyceryl group from phosphatidylglycerol to the sulfhydryl group of the N-terminal cysteine of a prolipoprotein, the first step in the formation of mature lipoproteins. The sequence is that of Phosphatidylglycerol--prolipoprotein diacylglyceryl transferase from Pseudomonas entomophila (strain L48).